Consider the following 956-residue polypeptide: Endogenous retrovirus group K member 6 Pol protein (956 aa).

The Reverse transcriptase domain occupies 57–245 (LEKGHIEPSF…TPFHYLGMQI (189 aa)). The LPQG motif lies at 161–164 (LPQG). A YXDD motif is present at residues 195–198 (CIDD). Residues 460–590 (LENALTVFTD…ADLLVSSALI (131 aa)) enclose the RNase H type-1 domain. The Mg(2+) site is built by Asp-469, Glu-497, Asp-517, and Asp-582. Residues 587-628 (SALIKAQELHALTHVNAAGLKNKFDVTWKQAKDIVQHCTQCQ) form an Integrase-type zinc finger. Zn(2+) contacts are provided by His-596, His-600, Cys-624, and Cys-627. The region spanning 642 to 803 (RGLCPNALWQ…TSAEQHLTGK (162 aa)) is the Integrase catalytic domain. The integrase-type DNA-binding region spans 811 to 859 (KLIWWKDNKNKTWEIGKVITWGRGFACVSPGENQLPVWIPTRHLKFYNE). A disordered region spans residues 865 to 890 (KKSTSAETETSQSSTVDSQDEQNGDV). A compositionally biased stretch (low complexity) spans 869–879 (SAETETSQSST).

This sequence belongs to the beta type-B retroviral polymerase family. HERV class-II K(HML-2) pol subfamily. In terms of processing, cleavage sites that yield the mature proteins remain to be determined.

The enzyme catalyses DNA(n) + a 2'-deoxyribonucleoside 5'-triphosphate = DNA(n+1) + diphosphate. The catalysed reaction is Endonucleolytic cleavage to 5'-phosphomonoester.. Functionally, early post-infection, the reverse transcriptase converts the viral RNA genome into double-stranded viral DNA. The RNase H domain of the reverse transcriptase performs two functions. It degrades the RNA template and specifically removes the RNA primer from the RNA/DNA hybrid. Following nuclear import, the integrase catalyzes the insertion of the linear, double-stranded viral DNA into the host cell chromosome. Endogenous Pol proteins may have kept, lost or modified their original function during evolution. The sequence is that of Endogenous retrovirus group K member 6 Pol protein (ERVK-6) from Homo sapiens (Human).